A 135-amino-acid polypeptide reads, in one-letter code: Galectin-1 (135 aa).

The residue at position 2 (alanine 2) is an N-acetylalanine. The 132-residue stretch at 4 to 135 (GLVASNLNLK…DFKIKCVAFE (132 aa)) folds into the Galectin domain. Lysine 13 and lysine 29 each carry N6-acetyllysine. At serine 30 the chain carries Phosphoserine. Residues 45-49 (HFNPR), histidine 53, asparagine 62, and 69-72 (WGAE) each bind a beta-D-galactoside. Residue lysine 108 is modified to N6-acetyllysine; alternate. Residue lysine 108 is modified to N6-succinyllysine; alternate. At lysine 128 the chain carries N6-acetyllysine.

In terms of assembly, homodimer. Binds LGALS3BP. Interacts with CD2, CD3, CD4, CD6, CD7, CD43, ALCAM and CD45. Interacts with laminin (via poly-N-acetyllactosamine). Interacts with SUSD2. Interacts with cargo receptor TMED10; the interaction mediates the translocation from the cytoplasm into the ERGIC (endoplasmic reticulum-Golgi intermediate compartment) and thereby secretion.

The protein resides in the secreted. It localises to the extracellular space. The protein localises to the extracellular matrix. It is found in the cytoplasm. In terms of biological role, lectin that binds beta-galactoside and a wide array of complex carbohydrates. Plays a role in regulating apoptosis, cell proliferation and cell differentiation. Inhibits CD45 protein phosphatase activity and therefore the dephosphorylation of Lyn kinase. Strong inducer of T-cell apoptosis. The chain is Galectin-1 (LGALS1) from Bos taurus (Bovine).